Here is a 237-residue protein sequence, read N- to C-terminus: Undecaprenyl-diphosphatase (237 aa).

Transmembrane regions (helical) follow at residues 38–58 (QTAV…FDGI), 65–85 (WRII…GVLF), 92–112 (LFSS…ILMF), 126–146 (MSFL…FPGI), 166–186 (ALQY…ILGL), 191–211 (VTIL…YVLS), and 217–237 (GKIW…YLVG).

This sequence belongs to the UppP family.

Its subcellular location is the cell inner membrane. It catalyses the reaction di-trans,octa-cis-undecaprenyl diphosphate + H2O = di-trans,octa-cis-undecaprenyl phosphate + phosphate + H(+). Functionally, catalyzes the dephosphorylation of undecaprenyl diphosphate (UPP). Confers resistance to bacitracin. This is Undecaprenyl-diphosphatase from Thermotoga sp. (strain RQ2).